A 164-amino-acid chain; its full sequence is Putative deoxyuridine 5'-triphosphate nucleotidohydrolase (164 aa).

65–67 (RSG) serves as a coordination point for substrate. Lys71 is subject to N6-acetyllysine; by host. Substrate-binding positions include 79–82 (GVVD), Gly90, and 138–139 (YG).

Belongs to the dUTPase family. It depends on Mg(2+) as a cofactor.

It carries out the reaction dUTP + H2O = dUMP + diphosphate + H(+). This enzyme is involved in nucleotide metabolism: it produces dUMP, the immediate precursor of thymidine nucleotides and it decreases the intracellular concentration of dUTP so that uracil cannot be incorporated into DNA. This Dryophytes versicolor (chameleon treefrog) protein is Putative deoxyuridine 5'-triphosphate nucleotidohydrolase.